Consider the following 123-residue polypeptide: MAKPSYVKFEVPQELAEKALEAVEIARDTGRIRKGTNETTKAVERGQAKLVIIAEDVDPEEIVAHLPPLCEEKEIPYIYVPSKKELGAAAGLEVAAASVAIIEPGKARELVEDIAMKVKELMK.

The protein belongs to the eukaryotic ribosomal protein eL8 family. Part of the 50S ribosomal subunit. Probably part of the RNase P complex.

It is found in the cytoplasm. Its function is as follows. Multifunctional RNA-binding protein that recognizes the K-turn motif in ribosomal RNA, the RNA component of RNase P, box H/ACA, box C/D and box C'/D' sRNAs. In Thermococcus gammatolerans (strain DSM 15229 / JCM 11827 / EJ3), this protein is Large ribosomal subunit protein eL8.